The following is a 224-amino-acid chain: Small ribosomal subunit protein uS3 (224 aa).

The region spanning isoleucine 38 to lysine 106 is the KH type-2 domain.

The protein belongs to the universal ribosomal protein uS3 family. In terms of assembly, part of the 30S ribosomal subunit. Forms a tight complex with proteins S10 and S14.

Its function is as follows. Binds the lower part of the 30S subunit head. Binds mRNA in the 70S ribosome, positioning it for translation. This is Small ribosomal subunit protein uS3 from Lactobacillus helveticus (strain DPC 4571).